The sequence spans 565 residues: Heme/hemopexin transporter protein HuxB (565 aa).

The first 26 residues, 1-26 (MKMRPRYSVIASAVSLGFVLSKSVMA), serve as a signal peptide directing secretion. The region spanning 73–150 (FPLTQVQILD…GTVKILLLKG (78 aa)) is the POTRA domain.

This sequence belongs to the TPS (TC 1.B.20) family.

The protein resides in the cell outer membrane. Likely functions in the release of soluble HxuA from the cell. Its function is as follows. Probable member of a two partner secretion pathway (TPS) in which it mediates the secretion of HuxA. The sequence is that of Heme/hemopexin transporter protein HuxB (hxuB) from Haemophilus influenzae.